An 81-amino-acid polypeptide reads, in one-letter code: Photosystem I iron-sulfur center (81 aa).

4Fe-4S ferredoxin-type domains follow at residues M1 to W31 and I39 to Y68. [4Fe-4S] cluster-binding residues include C11, C14, C17, C21, C48, C51, C54, and C58.

In terms of assembly, the cyanobacterial PSI reaction center is composed of one copy each of PsaA,B,C,D,E,F,I,J,K,L,M and X, and forms trimeric complexes. Requires [4Fe-4S] cluster as cofactor.

It is found in the cellular thylakoid membrane. The catalysed reaction is reduced [plastocyanin] + hnu + oxidized [2Fe-2S]-[ferredoxin] = oxidized [plastocyanin] + reduced [2Fe-2S]-[ferredoxin]. Functionally, apoprotein for the two 4Fe-4S centers FA and FB of photosystem I (PSI); essential for photochemical activity. FB is the terminal electron acceptor of PSI, donating electrons to ferredoxin. The C-terminus interacts with PsaA/B/D and helps assemble the protein into the PSI complex. Required for binding of PsaD and PsaE to PSI. PSI is a plastocyanin/cytochrome c6-ferredoxin oxidoreductase, converting photonic excitation into a charge separation, which transfers an electron from the donor P700 chlorophyll pair to the spectroscopically characterized acceptors A0, A1, FX, FA and FB in turn. The protein is Photosystem I iron-sulfur center of Microcystis aeruginosa (strain NIES-843 / IAM M-2473).